A 309-amino-acid polypeptide reads, in one-letter code: Methionyl-tRNA formyltransferase (309 aa).

112–115 (SLLP) provides a ligand contact to (6S)-5,6,7,8-tetrahydrofolate.

The protein belongs to the Fmt family.

The enzyme catalyses L-methionyl-tRNA(fMet) + (6R)-10-formyltetrahydrofolate = N-formyl-L-methionyl-tRNA(fMet) + (6S)-5,6,7,8-tetrahydrofolate + H(+). In terms of biological role, attaches a formyl group to the free amino group of methionyl-tRNA(fMet). The formyl group appears to play a dual role in the initiator identity of N-formylmethionyl-tRNA by promoting its recognition by IF2 and preventing the misappropriation of this tRNA by the elongation apparatus. This Bartonella tribocorum (strain CIP 105476 / IBS 506) protein is Methionyl-tRNA formyltransferase.